The following is a 105-amino-acid chain: MASQVMRITLKAYDHELVDSSAKKIIETVKKNGSQVSGPVPLPTKKEVVTILRATHKYKDSREQFEQRTHKRLIDIINPTQKTTESLSRIEMPAGVYIDIKMKQK.

It belongs to the universal ribosomal protein uS10 family. As to quaternary structure, part of the 30S ribosomal subunit.

Its function is as follows. Involved in the binding of tRNA to the ribosomes. The sequence is that of Small ribosomal subunit protein uS10 from Agathobacter rectalis (strain ATCC 33656 / DSM 3377 / JCM 17463 / KCTC 5835 / VPI 0990) (Eubacterium rectale).